We begin with the raw amino-acid sequence, 73 residues long: Serine rich endogenous peptide 14 (73 aa).

Residues 1-31 (MAAKTSNLVALLLSLFLLLLSISSQVGLGEA) form the signal peptide. The disordered stretch occupies residues 44–73 (VSHPSPPPPHRSMAPPIFVPPSTSHKGQGP). The short motif at 59–73 (PIFVPPSTSHKGQGP) is the SCOOP motif element. The segment covering 64 to 73 (PSTSHKGQGP) has biased composition (polar residues). The short motif at 65 to 67 (STS) is the SxS motif essential for MIK2 binding element.

This sequence belongs to the serine rich endogenous peptide (SCOOP) phytocytokine family. Interacts with MIK2 (via extracellular leucine-rich repeat domain); this interaction triggers the formation of complex between MIK2 and the BAK1/SERK3 and SERK4 coreceptors, and subsequent BAK1 activation by phosphorylation. As to expression, mostly expressed in seedlings shoots and leaves, and, to a lower extent, in roots, stems, siliques, seeds and flowers.

The protein resides in the cell membrane. It localises to the secreted. Its subcellular location is the extracellular space. The protein localises to the apoplast. In terms of biological role, brassicaceae-specific phytocytokine (plant endogenous peptide released into the apoplast) perceived by MIK2 in a BAK1/SERK3 and SERK4 coreceptors-dependent manner, that modulates various physiological and antimicrobial processes including growth prevention and reactive oxygen species (ROS) response regulation. Inhibits root growth and regulates root meristems. Prevents general growth and development. Exhibits antibacterial effects against Pseudomonas syringae pv. tomato DC3000, Ralstonia solanacearum, Bacillus subtilis and Agrobacterium tumefaciens, thus being an antimicrobial peptide (AMP). The sequence is that of Serine rich endogenous peptide 14 from Arabidopsis thaliana (Mouse-ear cress).